Here is a 203-residue protein sequence, read N- to C-terminus: Small ribosomal subunit protein uS4 (203 aa).

The S4 RNA-binding domain maps to 93 to 153 (RRLDNIVYRL…DKSKNLQQVK (61 aa)).

The protein belongs to the universal ribosomal protein uS4 family. In terms of assembly, part of the 30S ribosomal subunit. Contacts protein S5. The interaction surface between S4 and S5 is involved in control of translational fidelity.

In terms of biological role, one of the primary rRNA binding proteins, it binds directly to 16S rRNA where it nucleates assembly of the body of the 30S subunit. Its function is as follows. With S5 and S12 plays an important role in translational accuracy. This is Small ribosomal subunit protein uS4 from Lactobacillus gasseri (strain ATCC 33323 / DSM 20243 / BCRC 14619 / CIP 102991 / JCM 1131 / KCTC 3163 / NCIMB 11718 / NCTC 13722 / AM63).